The primary structure comprises 750 residues: Serine/threonine-protein kinase GE16371 (750 aa).

2 Doublecortin domains span residues 159-245 (LRIK…VEYN) and 315-398 (RIVT…AEDF). Residues 479–737 (YTLGKIIGDG…SEDILDHYWT (259 aa)) form the Protein kinase domain. ATP-binding positions include 485–493 (IGDGNFAIV) and K508. D600 serves as the catalytic Proton acceptor.

The protein belongs to the protein kinase superfamily. CAMK Ser/Thr protein kinase family. CaMK subfamily.

It carries out the reaction L-seryl-[protein] + ATP = O-phospho-L-seryl-[protein] + ADP + H(+). The catalysed reaction is L-threonyl-[protein] + ATP = O-phospho-L-threonyl-[protein] + ADP + H(+). This chain is Serine/threonine-protein kinase GE16371, found in Drosophila yakuba (Fruit fly).